Consider the following 100-residue polypeptide: uncharacterized protein (100 aa).

This is an uncharacterized protein from Acanthamoeba polyphaga mimivirus (APMV).